The following is a 654-amino-acid chain: Endoplasmic reticulum chaperone BiP (654 aa).

The first 18 residues, 1 to 18, serve as a signal peptide directing secretion; it reads MKFPMVAAALLLLCAVRA. The required for interaction with ELAPOR1 stretch occupies residues 1–80; sequence MKFPMVAAAL…EGERLIGDAA (80 aa). 36-39 is an ATP binding site; it reads GTTY. Ser86 is subject to Phosphoserine. Residue Lys96 coordinates ATP. Residue Lys125 is modified to N6-acetyllysine. A nucleotide-binding (NBD) region spans residues 125–280; it reads KPYIQVDIGG…KKKTGKDVRK (156 aa). Tyr160 carries the post-translational modification 3'-nitrotyrosine. At Lys213 the chain carries N6-acetyllysine. Residue 227–229 coordinates ATP; that stretch reads GGT. Lys271 carries the post-translational modification N6-acetyllysine. ATP is bound at residue 293 to 300; it reads EKAKRALS. Residue Lys326 is modified to N6-acetyllysine. A Glycyl lysine isopeptide (Lys-Gly) (interchain with G-Cter in SUMO2) cross-link involves residue Lys352. Lys353 carries the N6-acetyllysine; alternate modification. Lys353 participates in a covalent cross-link: Glycyl lysine isopeptide (Lys-Gly) (interchain with G-Cter in SUMO1); alternate. 364-367 is an ATP binding site; sequence GSTR. Residues 409 to 419 form an interdomain linker region; it reads QDTGDLVLLDV. A substrate-binding (SBD) region spans residues 420–500; the sequence is CPLTLGIETV…PRGVPQIEVT (81 aa). Lys447 is subject to N6-succinyllysine. Residue Arg492 is modified to Omega-N-methylarginine. Thr518 is modified (O-AMP-threonine; alternate). Thr518 carries the post-translational modification Phosphothreonine; alternate. Position 585 is an N6,N6,N6-trimethyllysine; by METTL21A; in vitro (Lys585). At Lys585 the chain carries N6,N6-dimethyllysine; alternate. N6-methyllysine; alternate is present on Lys585. An N6-methyllysine modification is found at Lys591. The segment at 632 to 654 is disordered; the sequence is SKLYGSAGPPPTGEEDTSEKDEL. Residues Thr643 and Thr648 each carry the phosphothreonine modification. A compositionally biased stretch (acidic residues) spans 644–654; that stretch reads GEEDTSEKDEL. Ser649 carries the phosphoserine modification. A Prevents secretion from ER motif is present at residues 651 to 654; sequence KDEL.

It belongs to the heat shock protein 70 family. Monomer and homooligomer; homooligomerization via the interdomain linker inactivates the chaperone activity and acts as a storage of HSPA5/BiP molecules. Interacts with DNAJC1 (via J domain). Component of an EIF2 complex at least composed of CELF1/CUGBP1, CALR, CALR3, EIF2S1, EIF2S2, HSP90B1 and HSPA5. Part of a large chaperone multiprotein complex comprising DNAJB11, HSP90B1, HSPA5, HYOU, PDIA2, PDIA4, PDIA6, PPIB, SDF2L1, UGGT1 and very small amounts of ERP29, but not, or at very low levels, CALR nor CANX. Interacts with TMEM132A and TRIM21. May form a complex with ERLEC1, OS9, SEL1L and SYVN1. Interacts with DNAJC10. Interacts with DNAJB9/ERdj4; leading to recruit HSPA5/BiP to ERN1/IRE1. Interacts with ERN1/IRE1 (via luminal domain); the interaction takes place following interaction with DNAJB9/ERdj4 and leads to inactivate ERN1/IRE1, the interaction also competitively inhibits ERN1 interaction with MANF. Interacts directly with MANF (via SAP domain); the interaction inhibits ATP binding to HSPA5/BiP and subsequent nucleotide exchange. Interacts with EIF2AK3/PERK (via luminal domain); interaction leads to inactivate EIF2AK3/PERK. Interacts with MX1. Interacts with METTL23. Interacts with CEMIP; the interaction induces calcium leakage from the endoplasmic reticulum and cell migration. Interacts with PCSK4 form; the interaction takes place in the endoplasmic reticulum. Interacts with CIPC. Interacts with CCDC88B (via C-terminus); the interaction opposes ERN1-mediated JNK activation, protecting against apoptosis. Interacts with INPP5K; necessary for INPP5K localization at the endoplasmic reticulum. Interacts with LOXL2; leading to activate the ERN1/IRE1-XBP1 pathway of the unfolded protein response. Interacts with CLU under stressed condition; interaction increases CLU protein stability; facilitates its retrotranslocation and redistribution to the mitochondria; cooperatively suppress stress-induced apoptosis by stabilizing mitochondrial membrane integrity. Interacts with CCDC47. Interacts with CLN3. Interacts with ELAPOR1; may regulate the function of HSPA5 in apoptosis and cell proliferation. Interacts with CASP7. Interacts with ILDR2; the interaction stabilizes ILDR2 expression. Interacts with ADAM7. In terms of processing, in unstressed cells, AMPylation at Thr-518 by FICD inactivates the chaperome activity: AMPylated form is locked in a relatively inert state and only weakly stimulated by J domain-containing proteins. In response to endoplasmic reticulum stress, de-AMPylation by the same protein, FICD, restores the chaperone activity.

It localises to the endoplasmic reticulum lumen. It is found in the melanosome. The protein localises to the cytoplasm. Its subcellular location is the cell surface. It catalyses the reaction ATP + H2O = ADP + phosphate + H(+). Its activity is regulated as follows. The chaperone activity is regulated by ATP-induced allosteric coupling of the nucleotide-binding (NBD) and substrate-binding (SBD) domains. In the ADP-bound and nucleotide-free (apo) states, the two domains have little interaction. In contrast, in the ATP-bound state the two domains are tightly coupled, which results in drastically accelerated kinetics in both binding and release of polypeptide substrates. J domain-containing co-chaperones (DNAJB9/ERdj4 or DNAJC10/ERdj5) stimulate the ATPase activity and are required for efficient substrate recognition by HSPA5/BiP. Homooligomerization inactivates participating HSPA5/BiP protomers and probably act as reservoirs to store HSPA5/BiP molecules when they are not needed by the cell. Functionally, endoplasmic reticulum chaperone that plays a key role in protein folding and quality control in the endoplasmic reticulum lumen. Involved in the correct folding of proteins and degradation of misfolded proteins via its interaction with DNAJC10/ERdj5, probably to facilitate the release of DNAJC10/ERdj5 from its substrate. Acts as a key repressor of the EIF2AK3/PERK and ERN1/IRE1-mediated unfolded protein response (UPR). In the unstressed endoplasmic reticulum, recruited by DNAJB9/ERdj4 to the luminal region of ERN1/IRE1, leading to disrupt the dimerization of ERN1/IRE1, thereby inactivating ERN1/IRE1. Also binds and inactivates EIF2AK3/PERK in unstressed cells. Accumulation of misfolded protein in the endoplasmic reticulum causes release of HSPA5/BiP from ERN1/IRE1 and EIF2AK3/PERK, allowing their homodimerization and subsequent activation. Plays an auxiliary role in post-translational transport of small presecretory proteins across endoplasmic reticulum (ER). May function as an allosteric modulator for SEC61 channel-forming translocon complex, likely cooperating with SEC62 to enable the productive insertion of these precursors into SEC61 channel. Appears to specifically regulate translocation of precursors having inhibitory residues in their mature region that weaken channel gating. May also play a role in apoptosis and cell proliferation. The sequence is that of Endoplasmic reticulum chaperone BiP from Cricetulus griseus (Chinese hamster).